Reading from the N-terminus, the 553-residue chain is Putative transport protein ASA_0825 (553 aa).

Transmembrane regions (helical) follow at residues 4–24 (IALSISMLSLVAVLGLWLGNW), 29–49 (VGLGIGGVLFGGIIVGHFAGV), 65–85 (FGLILFVYTIGIQVGPGFFSS), 95–115 (GFAALLVILGCVVAAGLHQLF), and 158–178 (MGYAVAYPFGICGILLTMWLV). 2 consecutive RCK C-terminal domains span residues 191-276 (DLFE…VLGE) and 279-361 (ETSL…VVGN). The next 6 membrane-spanning stretches (helical) occupy residues 371 to 391 (MLPVFIGIGLGVLLGSIPFYL), 403 to 425 (AGGPLVVALILSRIGSIGKLYWF), 439 to 459 (IVLFLAVVGFKSGAGFVDTLI), 465 to 485 (AWMMYGMAITLIPLLVVGVLA), 493 to 513 (YLTLCGLLAGSMTDPPALAFA), and 533 to 553 (LVMFLRIISPQLLAILLWAGV).

The protein belongs to the AAE transporter (TC 2.A.81) family. YidE subfamily.

Its subcellular location is the cell membrane. The protein is Putative transport protein ASA_0825 of Aeromonas salmonicida (strain A449).